The sequence spans 395 residues: MTKALYLDCHAGIAGDMLLSALVDLGANPEDIESELKKLPLDQFKLHFQKRVKQGIHAMTLNIDVKEANHHRHVNDIFKMIDDSTLPERVKYRSKKIFEIIGQAEAKIHGMSFEEVHFHEVGAMDSIIDIIGGCIALEQLGINTLYCSAIPTGHGKINIAHGIYPIPAPATAEILKGIPIAHFDVQSELTTPTGAAFAKGLVSSFGPFPSATIQHIGYGAGSKDFDFPNILRVIQFESEFEQQDSVQVIECQIDDMTPEALGYFMNNALEQGALDAYYTPIFMKKSRPSTQLTLICKLHDKTYFEQLILQETSSLGVRSTSVNRKTLNRAFKILSTQHGTVSIKFGLQNGKIMKMKPEYEDLKKIAKTTKQPFQVIHNEVLQQLYQTYHIGNILQ.

The protein belongs to the LarC family.

It carries out the reaction Ni(II)-pyridinium-3,5-bisthiocarboxylate mononucleotide = pyridinium-3,5-bisthiocarboxylate mononucleotide + Ni(2+). Functionally, involved in the biosynthesis of a nickel-pincer cofactor ((SCS)Ni(II) pincer complex). Binds Ni(2+), and functions in nickel delivery to pyridinium-3,5-bisthiocarboxylic acid mononucleotide (P2TMN), to form the mature cofactor. Is thus probably required for the activation of nickel-pincer cofactor-dependent enzymes. The chain is Pyridinium-3,5-bisthiocarboxylic acid mononucleotide nickel insertion protein from Staphylococcus epidermidis (strain ATCC 12228 / FDA PCI 1200).